We begin with the raw amino-acid sequence, 369 residues long: Transforming protein Maf (369 aa).

Disordered regions lie at residues 57 to 85 and 169 to 243; these read STPM…TDQK and GGAP…GLHF. Basic residues predominate over residues 173-183; it reads HYHHHHHHPHH. Residues 184–193 are compositionally biased toward gly residues; the sequence is GGGGGGGGHP. Low complexity predominate over residues 194-211; it reads HGAAPGSAPPSSASSSAA. Residues 212–226 show a composition bias toward gly residues; it reads GSGGGGGGGGGGAGG. The basic motif stretch occupies residues 274–299; the sequence is RLKQKRRTLKNRGYAQSCRFKRVQQR. Positions 274-337 constitute a bZIP domain; it reads RLKQKRRTLK…DAYKEKYEKL (64 aa). The tract at residues 302 to 323 is leucine-zipper; that stretch reads LESEKNQLLQQVEHLKQEISRL. The tract at residues 341-369 is disordered; that stretch reads GFRENGSSSDNPSSPEFFMYPRESSTTVM. A compositionally biased stretch (polar residues) spans 345 to 354; it reads NGSSSDNPSS.

The protein belongs to the bZIP family. Maf subfamily.

It is found in the host nucleus. In terms of biological role, might be a transcriptional trans-activator. In Galliformes, this protein is Transforming protein Maf (V-MAF).